The following is a 94-amino-acid chain: Neutrophil defensin 3 (94 aa).

Residues 1–19 (MRTLAILAAILLVALQAQA) form the signal peptide. Residues 20–38 (EPLQARADEVAAAPEQIAA) constitute a propeptide that is removed on maturation. Disulfide bonds link cysteine 66/cysteine 94, cysteine 68/cysteine 83, and cysteine 73/cysteine 93.

This sequence belongs to the alpha-defensin family. Dimer. As to quaternary structure, (Microbial infection) Interacts with herpes virus 1 HHV-1 envelope glycoprotein B; this interaction inhibits viral infection.

It localises to the secreted. In terms of biological role, effector molecule of the innate immune system that acts via antibiotic-like properties against a broad array of infectious agents including bacteria, fungi, and viruses. Possesses the ability to neutralize bacterial toxins such as B.anthracis lethal factor, Clostridium difficile cytotoxin B as well as leukocidin produced by Staphylococcus aureus. Also blocks herpes simplex virus infection by interacting with envelope glycoprotein B and thus preventing its binding to heparan sulfate, the receptor for attachment. The sequence is that of Neutrophil defensin 3 (DEFA3) from Homo sapiens (Human).